The sequence spans 687 residues: Acetolactate synthase catalytic subunit, mitochondrial (687 aa).

The transit peptide at 1–90 (MIRQSTLKNF…AEPDMDTSFV (90 aa)) directs the protein to the mitochondrion. The span at 43–52 (YYSASPLPAS) shows a compositional bias: low complexity. The disordered stretch occupies residues 43–68 (YYSASPLPASKRPEPAPSFNVDPLEQ). E139 is a thiamine diphosphate binding site. FAD-binding positions include R241, 355–376 (HGCA…VGAR), and 407–426 (EVSP…VEGD). Residues 499-579 (QHQMWAAQHW…VKILILNNEE (81 aa)) are thiamine pyrophosphate binding. The Mg(2+) site is built by D550, N577, and E579.

This sequence belongs to the TPP enzyme family. Homodimer. The acetolactate synthase complex contains the catalytic subunit ILV2 and the regulatory small subunit ILV6. It depends on Mg(2+) as a cofactor. Thiamine diphosphate is required as a cofactor.

The protein resides in the mitochondrion. The catalysed reaction is 2 pyruvate + H(+) = (2S)-2-acetolactate + CO2. It catalyses the reaction 2-oxobutanoate + pyruvate + H(+) = (S)-2-ethyl-2-hydroxy-3-oxobutanoate + CO2. It participates in amino-acid biosynthesis; L-isoleucine biosynthesis; L-isoleucine from 2-oxobutanoate: step 1/4. Its pathway is amino-acid biosynthesis; L-valine biosynthesis; L-valine from pyruvate: step 1/4. The regulatory subunit ILV6 stimulates enzymatic activity seven- to tenfold and confers sensitivity to inhibition by valine and activation by ATP. Catalytic subunit of mitochondrial acetolactate synthase, which catalyzes the first of a series of common steps in the biosynthesis of the branched-chain amino acids. Catalyzes the irreversible decarboxylation of pyruvate to a bound hydroxyethyl group that then condenses with either a second pyruvate molecule to form 2-acetolactate (AL) or with 2-ketobutyrate to form 2-aceto-2-hydroxybutyrate (AHB). The first product is the precursor for valine and leucine biosynthesis, while the second leads to isoleucine. This is Acetolactate synthase catalytic subunit, mitochondrial (ILV2) from Saccharomyces cerevisiae (strain ATCC 204508 / S288c) (Baker's yeast).